Here is a 401-residue protein sequence, read N- to C-terminus: Multidrug resistance protein MdtH (401 aa).

11 consecutive transmembrane segments (helical) span residues 13-33 (YFLL…FPLI), 34-54 (SIRF…ALGL), 99-116 (PWIL…GTLF), 139-159 (LLMM…SWLL), 165-185 (FVCW…VWLL), 214-234 (VLTL…LPIV), 243-263 (AAVK…LYPI), 277-297 (LMFG…ITHL), 299-319 (TLFM…PARE), 340-360 (LGLA…YDTG), and 368-388 (LPWF…YWQF).

This sequence belongs to the major facilitator superfamily. DHA1 family. MdtH (TC 2.A.1.2.21) subfamily.

The protein localises to the cell inner membrane. The chain is Multidrug resistance protein MdtH from Yersinia enterocolitica serotype O:8 / biotype 1B (strain NCTC 13174 / 8081).